Here is a 157-residue protein sequence, read N- to C-terminus: Ribosomal RNA large subunit methyltransferase H (157 aa).

S-adenosyl-L-methionine is bound by residues Leu-74, Gly-106, and 125–130; that span reads LGNITF.

It belongs to the RNA methyltransferase RlmH family. Homodimer.

It localises to the cytoplasm. It carries out the reaction pseudouridine(1915) in 23S rRNA + S-adenosyl-L-methionine = N(3)-methylpseudouridine(1915) in 23S rRNA + S-adenosyl-L-homocysteine + H(+). In terms of biological role, specifically methylates the pseudouridine at position 1915 (m3Psi1915) in 23S rRNA. In Lawsonia intracellularis (strain PHE/MN1-00), this protein is Ribosomal RNA large subunit methyltransferase H.